The sequence spans 69 residues: Trypsin/subtilisin inhibitor (69 aa).

Residues cysteine 4 and cysteine 49 are joined by a disulfide bond.

The protein belongs to the protease inhibitor I13 (potato type I serine protease inhibitor) family.

In terms of biological role, inhibitor of trypsin, chymotrypsin, subtilisin, etc. In Amaranthus caudatus (Love-lies-bleeding), this protein is Trypsin/subtilisin inhibitor.